The sequence spans 152 residues: Endoribonuclease YbeY (152 aa).

Zn(2+) contacts are provided by H113, H117, and H123.

This sequence belongs to the endoribonuclease YbeY family. Zn(2+) serves as cofactor.

The protein resides in the cytoplasm. Its function is as follows. Single strand-specific metallo-endoribonuclease involved in late-stage 70S ribosome quality control and in maturation of the 3' terminus of the 16S rRNA. The protein is Endoribonuclease YbeY of Janthinobacterium sp. (strain Marseille) (Minibacterium massiliensis).